The primary structure comprises 997 residues: Glutamate [NMDA] receptor subunit 1 (997 aa).

Positions 1–26 (MAVAEFVFCWPLFELAIVLLVAPIHA) are cleaved as a signal peptide. Residues 27 to 573 (AQRHTASDNP…TLVSFLQPFS (547 aa)) are Extracellular-facing. Residues asparagine 258, asparagine 314, asparagine 345, asparagine 397, asparagine 454, asparagine 481, and asparagine 501 are each glycosylated (N-linked (GlcNAc...) asparagine). Glycine contacts are provided by residues 530–532 (PLT) and arginine 537. Residues 574–594 (NTLWILVMVSVHVVALVLYLL) traverse the membrane as a helical segment. At 595-651 (DRFSPFGRFKLSHSDSNEEKALNLSSAVWFAWGVLLNSGIGEGTPRSFSARVLGMVW) the chain is on the cytoplasmic side. Residues 652 to 672 (AGFAMIIVASYTANLAAFLVL) traverse the membrane as a helical segment. Residues 673–831 (ERPKTKLSGI…KTPNTLGLKN (159 aa)) lie on the Extracellular side of the membrane. Residue asparagine 693 is glycosylated (N-linked (GlcNAc...) asparagine). Residues serine 703 and aspartate 747 each contribute to the glycine site. A helical membrane pass occupies residues 832–852 (MAGVFILVGVGIAGGVGLIII). Topologically, residues 853 to 997 (EVIYKKHQVK…YTSDVSHLVV (145 aa)) are cytoplasmic. The interval 947–997 (ELGKPGQSPKVMSANQPGMPMPMLGKTRPQQSVLPPRYSPGYTSDVSHLVV) is disordered. A compositionally biased stretch (polar residues) spans 987–997 (GYTSDVSHLVV).

It belongs to the glutamate-gated ion channel (TC 1.A.10.1) family. As to quaternary structure, forms a heteromeric NMDA channel with Nmdar2.

Its subcellular location is the cell membrane. The protein resides in the postsynaptic cell membrane. The protein localises to the postsynaptic density. Its function is as follows. NMDA receptor subtype of glutamate-gated ion channels with high calcium permeability and voltage-dependent sensitivity to magnesium. Mediated by glycine. This protein plays a key role in synaptic plasticity, synaptogenesis, excitotoxicity, memory acquisition and learning. It mediates neuronal functions in glutamate neurotransmission. Is involved in the cell surface targeting of NMDA receptors. Plays a role in associative learning and in long-term memory consolidation. This is Glutamate [NMDA] receptor subunit 1 from Drosophila erecta (Fruit fly).